Here is an 809-residue protein sequence, read N- to C-terminus: PiggyBac transposable element-derived protein 1 (809 aa).

An SCAN box domain is found at 44-126; that stretch reads RLRFRHFCYQ…TVLENLETGS (83 aa). A disordered region spans residues 170-199; the sequence is CEPPQRPQGNPQEVSGPVPHGSAHLQEKNP. Lysine 218 participates in a covalent cross-link: Glycyl lysine isopeptide (Lys-Gly) (interchain with G-Cter in SUMO2). The disordered stretch occupies residues 271–297; that stretch reads KQETSEEMEQSGEASGKPNRECAPQIP. Serine 360 is modified (phosphoserine).

The polypeptide is PiggyBac transposable element-derived protein 1 (PGBD1) (Homo sapiens (Human)).